Reading from the N-terminus, the 127-residue chain is MKVLLELLLGYSVHILAHELPDLPRTQHPPKSELSYWCTYVPQCDFCWDCQDGICKNKITESHFIDSNHSIVNCRVFRDSKTQSCLYEISSKMPNHFSMECLHPRPYTGNEIFMQTWGGGVTINNYL.

The N-terminal stretch at 1–17 is a signal peptide; that stretch reads MKVLLELLLGYSVHILA.

It belongs to the asfivirus MGF 110 family.

Plays a role in virus cell tropism, and may be required for efficient virus replication in macrophages. This Ornithodoros (relapsing fever ticks) protein is Protein MGF 110-14L.